A 110-amino-acid chain; its full sequence is Large ribosomal subunit protein uL22 (110 aa).

It belongs to the universal ribosomal protein uL22 family. In terms of assembly, part of the 50S ribosomal subunit.

This protein binds specifically to 23S rRNA; its binding is stimulated by other ribosomal proteins, e.g. L4, L17, and L20. It is important during the early stages of 50S assembly. It makes multiple contacts with different domains of the 23S rRNA in the assembled 50S subunit and ribosome. Its function is as follows. The globular domain of the protein is located near the polypeptide exit tunnel on the outside of the subunit, while an extended beta-hairpin is found that lines the wall of the exit tunnel in the center of the 70S ribosome. This is Large ribosomal subunit protein uL22 from Paraburkholderia phytofirmans (strain DSM 17436 / LMG 22146 / PsJN) (Burkholderia phytofirmans).